A 286-amino-acid chain; its full sequence is MNLKQKWDVYSRLTRLDRPIGTLLLLWPCLMALVLAAGGMPDIKVLIIFIIGVVIMRACGCIINDYADRDLDSHVERTRSRPLASGEISTKEALLLFVILGLAAFGLVLLLNGLVVKLSVVGIILTIIYPFTKRVTNMPQMFLGVVWSWSIPMAYAAQTGEVPIEAWWLFAANWFWTVAYDTMYAMVDRDDDLKVGIKSTAILFGQYDRQIIGLFQFAALLCFIAAGWSADRGLLYGLGLLTFVGFSTYQQMLIFGRERAPCFKAFLNNNWAGLALFVGLGADYLF.

7 helical membrane-spanning segments follow: residues 21–40, 96–116, 142–162, 167–187, 210–230, 235–255, and 266–286; these read GTLLLLWPCLMALVLAAGGM, LFVILGLAAFGLVLLLNGLVV, FLGVVWSWSIPMAYAAQTGEV, WWLFAANWFWTVAYDTMYAMV, QIIGLFQFAALLCFIAAGWSA, LYGLGLLTFVGFSTYQQMLIF, and FLNNNWAGLALFVGLGADYLF.

The protein belongs to the UbiA prenyltransferase family. It depends on Mg(2+) as a cofactor.

The protein resides in the cell inner membrane. It carries out the reaction all-trans-octaprenyl diphosphate + 4-hydroxybenzoate = 4-hydroxy-3-(all-trans-octaprenyl)benzoate + diphosphate. The protein operates within cofactor biosynthesis; ubiquinone biosynthesis. Catalyzes the prenylation of para-hydroxybenzoate (PHB) with an all-trans polyprenyl group. Mediates the second step in the final reaction sequence of ubiquinone-8 (UQ-8) biosynthesis, which is the condensation of the polyisoprenoid side chain with PHB, generating the first membrane-bound Q intermediate 3-octaprenyl-4-hydroxybenzoate. The protein is 4-hydroxybenzoate octaprenyltransferase of Shewanella sp. (strain MR-4).